A 265-amino-acid polypeptide reads, in one-letter code: 4-hydroxy-tetrahydrodipicolinate reductase (265 aa).

NAD(+) is bound by residues 7-12 (GASGRM) and Asp33. NADP(+) is bound at residue Arg34. Residues 96-98 (GTT) and 120-123 (AANM) each bind NAD(+). His153 acts as the Proton donor/acceptor in catalysis. Residue His154 coordinates (S)-2,3,4,5-tetrahydrodipicolinate. Lys157 acts as the Proton donor in catalysis. 163–164 (GT) is a (S)-2,3,4,5-tetrahydrodipicolinate binding site.

Belongs to the DapB family.

It is found in the cytoplasm. The catalysed reaction is (S)-2,3,4,5-tetrahydrodipicolinate + NAD(+) + H2O = (2S,4S)-4-hydroxy-2,3,4,5-tetrahydrodipicolinate + NADH + H(+). It catalyses the reaction (S)-2,3,4,5-tetrahydrodipicolinate + NADP(+) + H2O = (2S,4S)-4-hydroxy-2,3,4,5-tetrahydrodipicolinate + NADPH + H(+). The protein operates within amino-acid biosynthesis; L-lysine biosynthesis via DAP pathway; (S)-tetrahydrodipicolinate from L-aspartate: step 4/4. Functionally, catalyzes the conversion of 4-hydroxy-tetrahydrodipicolinate (HTPA) to tetrahydrodipicolinate. The sequence is that of 4-hydroxy-tetrahydrodipicolinate reductase from Burkholderia ambifaria (strain MC40-6).